Reading from the N-terminus, the 480-residue chain is Vacuolar amino acid transporter 2 (480 aa).

The segment at Leu21 to Thr48 is disordered. Residues Gly37–Ile46 show a composition bias toward polar residues. Transmembrane regions (helical) follow at residues Ala72 to Ile92, Ala95 to Leu115, Leu145 to Ile165, Leu214 to Ile234, Leu263 to Met283, Ile297 to Phe317, Ile338 to Leu358, Val394 to Ile414, and Phe447 to Ile467.

Belongs to the amino acid/polyamine transporter 2 family.

The protein localises to the vacuole membrane. Its function is as follows. Probable amino acid transporter of unknown specificity. The sequence is that of Vacuolar amino acid transporter 2 (AVT2) from Saccharomyces cerevisiae (strain ATCC 204508 / S288c) (Baker's yeast).